The chain runs to 72 residues: Penaeidin-2a (72 aa).

The first 21 residues, Met1–Ala21, serve as a signal peptide directing secretion. Cystine bridges form between Cys45-Cys59, Cys48-Cys66, and Cys60-Cys67. Lys71 bears the Lysine amide mark.

As to expression, higher expression in hemocytes and to a lesser extent in heart, testis, gills, intestine, lymphoid organ and hepatopancreas. Traces in eyes and subcuticular epithelium. Not present in the brain.

It localises to the cytoplasmic granule. Its function is as follows. Antibacterial activity against M.luteus and E.coli bacteria. Antifungal activity against N.crassa and F.oxysporum. Presents chitin-binding activity. This is Penaeidin-2a from Penaeus vannamei (Whiteleg shrimp).